Here is a 449-residue protein sequence, read N- to C-terminus: UDP-N-acetylmuramoylalanine--D-glutamate ligase (449 aa).

119–125 serves as a coordination point for ATP; it reads GTNGKTT.

It belongs to the MurCDEF family.

It localises to the cytoplasm. The catalysed reaction is UDP-N-acetyl-alpha-D-muramoyl-L-alanine + D-glutamate + ATP = UDP-N-acetyl-alpha-D-muramoyl-L-alanyl-D-glutamate + ADP + phosphate + H(+). It functions in the pathway cell wall biogenesis; peptidoglycan biosynthesis. Cell wall formation. Catalyzes the addition of glutamate to the nucleotide precursor UDP-N-acetylmuramoyl-L-alanine (UMA). In Lactococcus lactis subsp. cremoris (strain SK11), this protein is UDP-N-acetylmuramoylalanine--D-glutamate ligase.